The chain runs to 556 residues: Jerky protein homolog (556 aa).

One can recognise an HTH psq-type domain in the interval 11 to 62 (RGEKRKRVVLTLKEKIDICTRLEKGESRKALMQEYNVGMSTLYDIRAHKAQL). 2 consecutive DNA-binding regions (H-T-H motif) follow at residues 38–58 (RKALMQEYNVGMSTLYDIRAH) and 110–142 (PMLIEKAKDFYEQMQLTEPCVFSGGWLWRFKAR). An HTH CENPB-type domain is found at 77-149 (QRRTLHTPKL…KARHGIKKLD (73 aa)). Positions 213–382 (KDRLTVLMCA…VPSHVFRRAW (170 aa)) constitute a DDE-1 domain. Position 414 is a phosphoserine (Ser-414). Residues 439-482 (SWGVAGREAEGGRPPAATSPAEVVWSSEKTPKADQDGRGDPGEG) are disordered. Basic and acidic residues predominate over residues 467–479 (KTPKADQDGRGDP).

This sequence belongs to the tigger transposable element derived protein family. As to expression, expressed ubiquitously.

Its subcellular location is the nucleus. May bind DNA. This is Jerky protein homolog from Homo sapiens (Human).